Here is a 519-residue protein sequence, read N- to C-terminus: Amphoterin-induced protein 2 (519 aa).

The signal sequence occupies residues 1 to 38 (MSLRFHTLPTLPRAVKPGCRELLCLLVIAVMVSPSASG). Positions 39–67 (MCPTACICATDIVSCTNKNLSKVPGNLFR) constitute an LRRNT domain. Residues 39 to 397 (MCPTACICAT…RSHAHEAFNT (359 aa)) are Extracellular-facing. 2 disulfide bridges follow: C40–C46 and C44–C53. N-linked (GlcNAc...) asparagine glycosylation is present at N57. 6 LRR repeats span residues 68–89 (LIKR…WIPV), 93–114 (KLST…SFST), 117–138 (NLKC…TFQE), 141–162 (ALEV…AFGG), 165–186 (HLQK…LYTG), and 192–213 (DLTF…HINL). N103 carries N-linked (GlcNAc...) asparagine glycosylation. Positions 227 to 283 (NPFVCDCSLYSLLIFWYRRHFSSVMDFKNDYTCRLWSDSRHSHQLQLLQESFLNCSY) constitute an LRRCT domain. 2 cysteine pairs are disulfide-bonded: C231–C259 and C233–C281. Residues N280, N287, N344, N372, N380, N383, and N387 are each glycosylated (N-linked (GlcNAc...) asparagine). Residues 288 to 378 (GSFHALGFIH…RLLNETVDIM (91 aa)) form the Ig-like C2-type domain. Residues C309 and C362 are joined by a disulfide bond. A helical membrane pass occupies residues 398-418 (AFTTLAACVASIVLVLLYLYL). Residues 419–519 (TPCPCKCKAK…FSDTPFVAST (101 aa)) are Cytoplasmic-facing. Positions 498–519 (RAKSDSDSVNSVFSDTPFVAST) are disordered.

This sequence belongs to the immunoglobulin superfamily. AMIGO family. Binds itself as well as AMIGO1 and AMIGO3. Highest level in cerebellum, retina, liver, and lung. Lower levels in cerebrum, kidney, small intestine, spleen and testis.

The protein resides in the cell membrane. It is found in the nucleus. Required for depolarization-dependent survival of cultured cerebellar granule neurons. May mediate homophilic as well as heterophilic cell-cell interaction with AMIGO1 or AMIGO3. May contribute to signal transduction through its intracellular domain. The protein is Amphoterin-induced protein 2 of Mus musculus (Mouse).